The following is a 327-amino-acid chain: Acyl-CoA desaturase (327 aa).

Residues 1 to 39 lie on the Cytoplasmic side of the membrane; it reads MPDREIKSPIWHPEPGTVEDVFDHTYKEKEGPKPPTVIV. A helical membrane pass occupies residues 40-60; it reads WRNVILMSLLHLGALYGLFLF. Substrate is bound at residue Asn-42. At 61–64 the chain is on the lumenal side; it reads PSAR. Residues 65–85 traverse the membrane as a helical segment; sequence ALTWIWFFGCLLFSALGITAG. The Cytoplasmic segment spans residues 86-184; sequence AHRLWSHRSY…DKVVMFQRRF (99 aa). Residues His-87 and His-92 each contribute to the Fe cation site. The Histidine box-1 motif lies at 87 to 92; that stretch reads HRLWSH. Residues Asn-115, Arg-122, and Asp-123 each coordinate substrate. His-124, His-127, and His-128 together coordinate Fe cation. Positions 124–128 match the Histidine box-2 motif; sequence HRVHH. The substrate site is built by Arg-155 and Lys-156. Residues 185-204 form a helical membrane-spanning segment; sequence YKPSVLLMCFFVPTFVPWYV. The Lumenal segment spans residues 205–208; it reads WGES. Residues 209–230 form a helical membrane-spanning segment; it reads LWVAYFVPALLRYALVLNATWL. Trp-229 provides a ligand contact to substrate. Residues 231 to 327 are Cytoplasmic-facing; the sequence is VNSAAHMWGN…RTGDGSHWSG (97 aa). Fe cation is bound by residues His-236, His-265, His-268, and His-269. The short motif at 265-269 is the Histidine box-3 element; it reads HNYHH.

This sequence belongs to the fatty acid desaturase type 1 family. It depends on Fe(2+) as a cofactor.

The protein localises to the endoplasmic reticulum membrane. The catalysed reaction is octadecanoyl-CoA + 2 Fe(II)-[cytochrome b5] + O2 + 2 H(+) = (9Z)-octadecenoyl-CoA + 2 Fe(III)-[cytochrome b5] + 2 H2O. Stearoyl-CoA desaturase that utilizes O(2) and electrons from reduced cytochrome b5 to introduce the first double bond into saturated fatty acyl-CoA substrates. Has high specificity and catalyzes the insertion of a cis double bond at the delta-9 position into fatty acyl-CoA substrates including palmitoyl-CoA and stearoyl-CoA. Contributes to the biosynthesis of membrane phospholipids, cholesterol esters and triglycerides. The chain is Acyl-CoA desaturase from Cyprinus carpio (Common carp).